Here is a 335-residue protein sequence, read N- to C-terminus: NAC domain-containing protein 40 (335 aa).

Residues 14-156 (LFPGFRFSPT…ALVVCRLRKN (143 aa)) form the NAC domain. A DNA-binding region spans residues 112 to 162 (VGTKRTLVFHIGRAPRGERTEWIMHEYCIHGAPQDALVVCRLRKNADFRAS). A compositionally biased stretch (polar residues) spans 245–254 (PTNPTHQETI). A disordered region spans residues 245 to 267 (PTNPTHQETISSESSSKRSKCGI). Residues 313 to 333 (VLATTVFLAILFSFFWTVLIA) traverse the membrane as a helical segment.

In terms of processing, proteolytically cleaved, probably by metalloprotease activity. This cleavage mediates a translocation from the plasma membrane to the nucleus. In terms of tissue distribution, expressed in seeds, leaves, roots and inflorescence. Expressed in roots, rosette leaves, cauline leaves, shoot apex, stems and flowers.

The protein localises to the cell membrane. The protein resides in the nucleus. In terms of biological role, transcriptional activator activated by proteolytic cleavage through regulated intramembrane proteolysis (RIP), probably via metalloprotease activity. Regulates gibberellic acid-mediated salt-responsive repression of seed germination and flowering via FT, thus delaying seed germination under high salinity conditions. The sequence is that of NAC domain-containing protein 40 from Arabidopsis thaliana (Mouse-ear cress).